Consider the following 120-residue polypeptide: Immunoglobulin lambda variable 2-14 (120 aa).

An N-terminal signal peptide occupies residues 1–19; that stretch reads MAWALLLLTLLTQGTGSWA. Gln20 bears the Pyrrolidone carboxylic acid mark. A framework-1 region spans residues 20 to 44; it reads QSALTQPASVSGSPGQSITISCTGT. The region spanning 20–119 is the Ig-like domain; that stretch reads QSALTQPASV…SSYTSSSTLH (100 aa). A disulfide bridge connects residues Cys41 and Cys109. The complementarity-determining-1 stretch occupies residues 45-53; that stretch reads SSDVGGYNY. A framework-2 region spans residues 54-70; the sequence is VSWYQQHPGKAPKLMIY. The interval 71–73 is complementarity-determining-2; that stretch reads EVS. The framework-3 stretch occupies residues 74–109; it reads NRPSGVSNRFSGSKSGNTASLTISGLQAEDEADYYC. A complementarity-determining-3 region spans residues 110 to 119; sequence SSYTSSSTLH.

In terms of assembly, immunoglobulins are composed of two identical heavy chains and two identical light chains; disulfide-linked.

The protein localises to the secreted. The protein resides in the cell membrane. In terms of biological role, v region of the variable domain of immunoglobulin light chains that participates in the antigen recognition. Immunoglobulins, also known as antibodies, are membrane-bound or secreted glycoproteins produced by B lymphocytes. In the recognition phase of humoral immunity, the membrane-bound immunoglobulins serve as receptors which, upon binding of a specific antigen, trigger the clonal expansion and differentiation of B lymphocytes into immunoglobulins-secreting plasma cells. Secreted immunoglobulins mediate the effector phase of humoral immunity, which results in the elimination of bound antigens. The antigen binding site is formed by the variable domain of one heavy chain, together with that of its associated light chain. Thus, each immunoglobulin has two antigen binding sites with remarkable affinity for a particular antigen. The variable domains are assembled by a process called V-(D)-J rearrangement and can then be subjected to somatic hypermutations which, after exposure to antigen and selection, allow affinity maturation for a particular antigen. The protein is Immunoglobulin lambda variable 2-14 of Homo sapiens (Human).